We begin with the raw amino-acid sequence, 148 residues long: Glutamyl-tRNA(Gln) amidotransferase subunit C, mitochondrial (148 aa).

This sequence belongs to the GatC family. In terms of assembly, subunit of the heterotrimeric GatCAB amidotransferase (AdT) complex, composed of A, B and C subunits.

It is found in the mitochondrion. The catalysed reaction is L-glutamyl-tRNA(Gln) + L-glutamine + ATP + H2O = L-glutaminyl-tRNA(Gln) + L-glutamate + ADP + phosphate + H(+). Allows the formation of correctly charged Gln-tRNA(Gln) through the transamidation of misacylated Glu-tRNA(Gln) in the mitochondria. The reaction takes place in the presence of glutamine and ATP through an activated gamma-phospho-Glu-tRNA(Gln). This chain is Glutamyl-tRNA(Gln) amidotransferase subunit C, mitochondrial, found in Drosophila melanogaster (Fruit fly).